The chain runs to 135 residues: Transcription antitermination protein NusB (135 aa).

It belongs to the NusB family.

Functionally, involved in transcription antitermination. Required for transcription of ribosomal RNA (rRNA) genes. Binds specifically to the boxA antiterminator sequence of the ribosomal RNA (rrn) operons. The protein is Transcription antitermination protein NusB of Clostridium perfringens (strain ATCC 13124 / DSM 756 / JCM 1290 / NCIMB 6125 / NCTC 8237 / Type A).